The primary structure comprises 382 residues: Hyaluronidase (382 aa).

A signal peptide (or 24) is located at residues 1–28 (MSRPLVITEGMMIGVLLMLAPINALLLG). Residues 29–33 (FVQST) constitute a propeptide that is removed on maturation. Disulfide bonds link C54–C345 and C221–C233. N115 carries an N-linked (GlcNAc...) asparagine glycan. E145 serves as the catalytic Proton donor. N263 carries N-linked (GlcNAc...) (complex) asparagine glycosylation.

This sequence belongs to the glycosyl hydrolase 56 family. As to quaternary structure, homotetramer. Post-translationally, N-glycosylated. Glycans found include a majority of small oligosaccharides (Man1-3GlcNAc2), most of which are either alpha 1,3-monofucosylated or alpha 1,3-(alpha 1,6-)difucosylated at the innermost GlcNAc residue, approximately 5% of high-mannose type structures, and 8% contains the terminal trisaccharide GalNAc beta 1-4[Fuc alpha 1-3]GlcNAc beta 1-in beta 1,2-linkage to the core alpha 1,3-mannosyl residue. As to expression, expressed in the venom glands of worker bees. It is also detected in the testes of drones but not in the queen-bee venom glands or in pupae.

It localises to the secreted. It catalyses the reaction Random hydrolysis of (1-&gt;4)-linkages between N-acetyl-beta-D-glucosamine and D-glucuronate residues in hyaluronate.. Hydrolyzes high molecular weight hyaluronic acid to produce small oligosaccharides. The chain is Hyaluronidase from Apis mellifera (Honeybee).